Here is a 123-residue protein sequence, read N- to C-terminus: Small ribosomal subunit protein uS12cz/uS12cy (123 aa).

This sequence belongs to the universal ribosomal protein uS12 family. As to quaternary structure, part of the 30S ribosomal subunit.

It is found in the plastid. Its subcellular location is the chloroplast. With S4 and S5 plays an important role in translational accuracy. Located at the interface of the 30S and 50S subunits. This Nandina domestica (Heavenly bamboo) protein is Small ribosomal subunit protein uS12cz/uS12cy (rps12-A).